The chain runs to 96 residues: Small ribosomal subunit protein bS6 (96 aa).

The protein belongs to the bacterial ribosomal protein bS6 family.

Its function is as follows. Binds together with bS18 to 16S ribosomal RNA. This is Small ribosomal subunit protein bS6 from Mycolicibacterium paratuberculosis (strain ATCC BAA-968 / K-10) (Mycobacterium paratuberculosis).